We begin with the raw amino-acid sequence, 132 residues long: ATP synthase epsilon chain (132 aa).

Belongs to the ATPase epsilon chain family. F-type ATPases have 2 components, CF(1) - the catalytic core - and CF(0) - the membrane proton channel. CF(1) has five subunits: alpha(3), beta(3), gamma(1), delta(1), epsilon(1). CF(0) has three main subunits: a, b and c.

The protein localises to the cell inner membrane. Produces ATP from ADP in the presence of a proton gradient across the membrane. The protein is ATP synthase epsilon chain of Jannaschia sp. (strain CCS1).